A 222-amino-acid polypeptide reads, in one-letter code: Deoxyribose-phosphate aldolase (222 aa).

Asp92 serves as the catalytic Proton donor/acceptor. Lys156 acts as the Schiff-base intermediate with acetaldehyde in catalysis. Lys185 acts as the Proton donor/acceptor in catalysis.

Belongs to the DeoC/FbaB aldolase family. DeoC type 1 subfamily. In terms of assembly, homodimer.

The protein localises to the cytoplasm. It carries out the reaction 2-deoxy-D-ribose 5-phosphate = D-glyceraldehyde 3-phosphate + acetaldehyde. The protein operates within carbohydrate degradation; 2-deoxy-D-ribose 1-phosphate degradation; D-glyceraldehyde 3-phosphate and acetaldehyde from 2-deoxy-alpha-D-ribose 1-phosphate: step 2/2. Shows high stability to high concentrations of acetaldehyde. Catalyzes a reversible aldol reaction between acetaldehyde and D-glyceraldehyde 3-phosphate to generate 2-deoxy-D-ribose 5-phosphate. The chain is Deoxyribose-phosphate aldolase from Aciduliprofundum boonei (strain DSM 19572 / T469).